The primary structure comprises 325 residues: Bifunctional nuclease 2 (325 aa).

Positions 119 to 254 constitute a BFN domain; the sequence is CVHNNSQGRN…SLAYSDGIRS (136 aa). The 36-residue stretch at 285–320 folds into the UVR domain; the sequence is EAQEFGLIRNMLIAAVEERYKDAATWRDKLMLLRSK.

Belongs to the bifunctional nuclease family.

Its subcellular location is the nucleus. Its function is as follows. Bifunctional nuclease with both RNase and DNase activities. Involved in basal defense response. Participates in abscisic acid-derived callose deposition following infection by a necrotrophic pathogen. This chain is Bifunctional nuclease 2 (BBD2), found in Oryza sativa subsp. japonica (Rice).